Here is a 370-residue protein sequence, read N- to C-terminus: Glutamine synthetase (370 aa).

Residue Ala2 is modified to N-acetylalanine. A Phosphoserine modification is found at Ser5. The 80-residue stretch at Ile24–Gly103 folds into the GS beta-grasp domain. The region spanning His110–Ser370 is the GS catalytic domain. Residues Lys283, Lys324, and Lys363 each participate in a glycyl lysine isopeptide (Lys-Gly) (interchain with G-Cter in ubiquitin) cross-link.

Belongs to the glutamine synthetase family. Homooctamer.

Its subcellular location is the cytoplasm. The enzyme catalyses L-glutamate + NH4(+) + ATP = L-glutamine + ADP + phosphate + H(+). The sequence is that of Glutamine synthetase (GLN1) from Saccharomyces cerevisiae (strain ATCC 204508 / S288c) (Baker's yeast).